Here is a 361-residue protein sequence, read N- to C-terminus: MLYNLLLPYIHNSHIANLFHYITFRSGLAVLVTLSLSFLIGPRLIKFLQTLQKYGQPIRLDGPESHQAKAGTPTMGGIMIILSSCFSTLLLADLTNKYIWITLFGFVSFGIIGFLDDYAKVTKNNHYGVKGKSKLLLQGIISLIVCILLEYTIDSPSHMLNVPFFKSLSMDLGYLYIFFAIFVIVGASNAVNLTDGLDGLATVPIALTAGSFALISYLVGNLIYSNYLQLTYLPNTGELTIFCASIVGSCLGFLWFNAQPAEVFMGDTGSLSLGGVLGIISVITKHEIVLGIVGGLFVIETISVIMQVYYFKATKGKRIFKMAPLHHHFEKSGWTESKVVIRFWIISLIFVLIGLSSLKLR.

10 helical membrane passes run 28 to 48, 74 to 94, 99 to 119, 135 to 155, 167 to 187, 203 to 223, 236 to 256, 263 to 283, 288 to 308, and 338 to 358; these read LAVLVTLSLSFLIGPRLIKFL, TMGGIMIILSSCFSTLLLADL, IWITLFGFVSFGIIGFLDDYA, LLLQGIISLIVCILLEYTIDS, SLSMDLGYLYIFFAIFVIVGA, VPIALTAGSFALISYLVGNLI, TGELTIFCASIVGSCLGFLWF, VFMGDTGSLSLGGVLGIISVI, IVLGIVGGLFVIETISVIMQV, and KVVIRFWIISLIFVLIGLSSL.

This sequence belongs to the glycosyltransferase 4 family. MraY subfamily. It depends on Mg(2+) as a cofactor.

The protein localises to the cell inner membrane. It catalyses the reaction UDP-N-acetyl-alpha-D-muramoyl-L-alanyl-gamma-D-glutamyl-meso-2,6-diaminopimeloyl-D-alanyl-D-alanine + di-trans,octa-cis-undecaprenyl phosphate = di-trans,octa-cis-undecaprenyl diphospho-N-acetyl-alpha-D-muramoyl-L-alanyl-D-glutamyl-meso-2,6-diaminopimeloyl-D-alanyl-D-alanine + UMP. The protein operates within cell wall biogenesis; peptidoglycan biosynthesis. Catalyzes the initial step of the lipid cycle reactions in the biosynthesis of the cell wall peptidoglycan: transfers peptidoglycan precursor phospho-MurNAc-pentapeptide from UDP-MurNAc-pentapeptide onto the lipid carrier undecaprenyl phosphate, yielding undecaprenyl-pyrophosphoryl-MurNAc-pentapeptide, known as lipid I. The chain is Phospho-N-acetylmuramoyl-pentapeptide-transferase from Rickettsia bellii (strain RML369-C).